The chain runs to 71 residues: uncharacterized protein (71 aa).

Belongs to the ycf40 family.

The protein localises to the plastid. Its subcellular location is the chloroplast. This is an uncharacterized protein from Pyropia yezoensis (Susabi-nori).